Reading from the N-terminus, the 348-residue chain is Dihydroorotase (348 aa).

Histidine 14 and histidine 16 together coordinate Zn(2+). Residues 16 to 18 (HLR) and asparagine 42 contribute to the substrate site. Zn(2+)-binding residues include lysine 100, histidine 137, and histidine 175. Lysine 100 carries the post-translational modification N6-carboxylysine. Position 137 (histidine 137) interacts with substrate. Leucine 220 serves as a coordination point for substrate. Residue aspartate 248 participates in Zn(2+) binding. Residue aspartate 248 is part of the active site. Substrate is bound by residues histidine 252 and alanine 264.

This sequence belongs to the metallo-dependent hydrolases superfamily. DHOase family. Class II DHOase subfamily. As to quaternary structure, homodimer. Zn(2+) is required as a cofactor.

The catalysed reaction is (S)-dihydroorotate + H2O = N-carbamoyl-L-aspartate + H(+). The protein operates within pyrimidine metabolism; UMP biosynthesis via de novo pathway; (S)-dihydroorotate from bicarbonate: step 3/3. In terms of biological role, catalyzes the reversible cyclization of carbamoyl aspartate to dihydroorotate. This chain is Dihydroorotase, found in Pseudomonas putida (strain GB-1).